The chain runs to 449 residues: Glycerol-3-phosphate acyltransferase 3 (449 aa).

A run of 3 helical transmembrane segments spans residues 9–29 (FVLL…PAMF), 146–166 (ISVR…CVLL), and 170–190 (ITLA…VGFL). The HXXXXD motif motif lies at 238–243 (HTSPID). Residues 358–378 (MVSYILRMMTSWAIVCNVWYL) form a helical membrane-spanning segment.

It belongs to the 1-acyl-sn-glycerol-3-phosphate acyltransferase family.

Its subcellular location is the endoplasmic reticulum membrane. It carries out the reaction sn-glycerol 3-phosphate + an acyl-CoA = a 1-acyl-sn-glycero-3-phosphate + CoA. It catalyses the reaction a 1-acyl-sn-glycero-3-phosphate + an acyl-CoA = a 1,2-diacyl-sn-glycero-3-phosphate + CoA. The enzyme catalyses dodecanoyl-CoA + sn-glycerol 3-phosphate = 1-dodecanoyl-sn-glycerol 3-phosphate + CoA. The catalysed reaction is sn-glycerol 3-phosphate + hexadecanoyl-CoA = 1-hexadecanoyl-sn-glycero-3-phosphate + CoA. It carries out the reaction sn-glycerol 3-phosphate + (9Z)-octadecenoyl-CoA = 1-(9Z-octadecenoyl)-sn-glycero-3-phosphate + CoA. It catalyses the reaction (9Z,12Z)-octadecadienoyl-CoA + sn-glycerol 3-phosphate = 1-(9Z,12Z)-octadecadienoyl-sn-glycero-3-phosphate + CoA. The enzyme catalyses 1-tetradecanoyl-sn-glycerol 3-phosphate + (9Z)-octadecenoyl-CoA = 1-tetradecanoyl-2-(9Z)-octadecenoyl-sn-glycero-3-phosphate + CoA. The catalysed reaction is 1-hexadecanoyl-sn-glycero-3-phosphate + (9Z)-octadecenoyl-CoA = 1-hexadecanoyl-2-(9Z-octadecenoyl)-sn-glycero-3-phosphate + CoA. It carries out the reaction 1-(9Z-octadecenoyl)-sn-glycero-3-phosphate + (9Z)-octadecenoyl-CoA = 1,2-di-(9Z-octadecenoyl)-sn-glycero-3-phosphate + CoA. It catalyses the reaction 1-(6Z,9Z,12Z-octadecatrienoyl)-sn-glycero-3-phosphate + (9Z)-octadecenoyl-CoA = (6Z,9Z,12Z)-octadecatrienoyl-2-(9Z)-octadecenoyl-sn-glycero-3-phosphate + CoA. The enzyme catalyses 1-(9Z,12Z,15Z)-octadecatrienoyl-sn-glycero-3-phosphate + (9Z)-octadecenoyl-CoA = 1-(9Z,12Z,15Z)-octadecatrienoyl-2-(9Z)-octadecenoyl-sn-glycero-3-phosphate + CoA. The catalysed reaction is 1-(9Z-octadecenoyl)-sn-glycero-3-phosphate + tetradecanoyl-CoA = 1-(9Z)-octadecenoyl-2-tetradecanoyl-sn-glycero-3-phosphate + CoA. It carries out the reaction 1-(9Z-octadecenoyl)-sn-glycero-3-phosphate + hexadecanoyl-CoA = 1-(9Z)-octadecenoyl-2-hexadecanoyl-sn-glycero-3-phosphate + CoA. It catalyses the reaction 1-(9Z-octadecenoyl)-sn-glycero-3-phosphate + octadecanoyl-CoA = 1-(9Z-octadecenoyl)-2-octadecanoyl-sn-glycero-3-phosphate + CoA. The enzyme catalyses 1-(9Z-octadecenoyl)-sn-glycero-3-phosphate + (9Z,12Z)-octadecadienoyl-CoA = 1-(9Z)-octadecenoyl-2-(9Z,12Z)-octadecadienoyl-sn-glycero-3-phosphate + CoA. The catalysed reaction is 1-(5Z,8Z,11Z,14Z-eicosatetraenoyl)-sn-glycero-3-phosphate + (9Z)-octadecenoyl-CoA = 1-(5Z,8Z,11Z,14Z)-eicosatetraenoyl-2-(9Z)-octadecenoyl-sn-glycero-3-phosphate + CoA. It functions in the pathway glycerolipid metabolism; triacylglycerol biosynthesis. It participates in phospholipid metabolism; CDP-diacylglycerol biosynthesis; CDP-diacylglycerol from sn-glycerol 3-phosphate: step 1/3. In terms of biological role, converts glycerol-3-phosphate to 1-acyl-sn-glycerol-3-phosphate (lysophosphatidic acid or LPA) by incorporating an acyl moiety at the sn-1 position of the glycerol backbone. Also converts LPA into 1,2-diacyl-sn-glycerol-3-phosphate (phosphatidic acid or PA) by incorporating an acyl moiety at the sn-2 position of the glycerol backbone. Protects cells against lipotoxicity. This is Glycerol-3-phosphate acyltransferase 3 from Danio rerio (Zebrafish).